The primary structure comprises 642 residues: Threonine--tRNA ligase (642 aa).

Residues 1–61 (MPVITLPDGS…DTDSELSIIT (61 aa)) enclose the TGS domain. The tract at residues 243–534 (DHRKIGKQLD…LIEEYAGKFP (292 aa)) is catalytic. Residues Cys-334, His-385, and His-511 each coordinate Zn(2+).

It belongs to the class-II aminoacyl-tRNA synthetase family. As to quaternary structure, homodimer. Requires Zn(2+) as cofactor.

It localises to the cytoplasm. It carries out the reaction tRNA(Thr) + L-threonine + ATP = L-threonyl-tRNA(Thr) + AMP + diphosphate + H(+). Catalyzes the attachment of threonine to tRNA(Thr) in a two-step reaction: L-threonine is first activated by ATP to form Thr-AMP and then transferred to the acceptor end of tRNA(Thr). Also edits incorrectly charged L-seryl-tRNA(Thr). The sequence is that of Threonine--tRNA ligase from Shewanella piezotolerans (strain WP3 / JCM 13877).